The chain runs to 243 residues: tRNA pseudouridine synthase A (243 aa).

Residue aspartate 53 is the Nucleophile of the active site. Substrate is bound at residue tyrosine 111.

This sequence belongs to the tRNA pseudouridine synthase TruA family. In terms of assembly, homodimer.

It catalyses the reaction uridine(38/39/40) in tRNA = pseudouridine(38/39/40) in tRNA. Functionally, formation of pseudouridine at positions 38, 39 and 40 in the anticodon stem and loop of transfer RNAs. The sequence is that of tRNA pseudouridine synthase A from Chlorobium chlorochromatii (strain CaD3).